Consider the following 399-residue polypeptide: Putative glutamate--cysteine ligase 2 (399 aa).

The tract at residues 377-399 (PAVGSSHGRTDPSRNGGPSHAGA) is disordered.

This sequence belongs to the glutamate--cysteine ligase type 2 family. YbdK subfamily.

It catalyses the reaction L-cysteine + L-glutamate + ATP = gamma-L-glutamyl-L-cysteine + ADP + phosphate + H(+). Functionally, ATP-dependent carboxylate-amine ligase which exhibits weak glutamate--cysteine ligase activity. The polypeptide is Putative glutamate--cysteine ligase 2 (Thermobifida fusca (strain YX)).